The primary structure comprises 146 residues: Hemagglutinin component HA-17 type D (146 aa).

As to quaternary structure, botulinum toxins are produced as large progenitor toxins of 12S (M toxin, about 280 kDa) and 16S (L toxin, about 650 kDa). M toxin consists of a non-toxic, non-hemagglutinin component (NTNHA) and the neurotoxin (BoNT/D). L toxin consists of the M toxin and the 3 hemagglutinin (HA) subcomponents of 70, 33, and 17 kDa. The stoichiometry of the whole complex has been modeled as one BoNT/D, one NTNHA, three HA-70, six HA-33 and three HA-17. HA-33 and HA-17 crystallize as a heterotrimer with two HA-33 and one HA-17.

It is found in the secreted. The hemagglutinin (HA) component of the progenitor toxin protects the structural integrity of the neurotoxin; may increase internalization of the neurotoxin into the bloodstream of the host. Involved in binding to the small intestine through interactions with glycolipids and glycoproteins containing sialic acid moieties. The hemagglutinin complex composed of HA-70, HA-33 and HA-17 agglutinates erythrocytes, whereas the individual compenents do not. Erythrocyte agglutination also occurs with the entire toxin complex. This is Hemagglutinin component HA-17 type D from Clostridium botulinum D phage (Clostridium botulinum D bacteriophage).